A 395-amino-acid polypeptide reads, in one-letter code: Phosphoglycerate kinase (395 aa).

Residues 22-24, Arg37, 60-63, Arg116, and Arg149 each bind substrate; these read DLN and HFGR. Residues Lys199, Glu322, and 352 to 355 each bind ATP; that span reads GGDT.

Belongs to the phosphoglycerate kinase family. In terms of assembly, monomer.

Its subcellular location is the cytoplasm. The catalysed reaction is (2R)-3-phosphoglycerate + ATP = (2R)-3-phospho-glyceroyl phosphate + ADP. It functions in the pathway carbohydrate degradation; glycolysis; pyruvate from D-glyceraldehyde 3-phosphate: step 2/5. The sequence is that of Phosphoglycerate kinase from Novosphingobium aromaticivorans (strain ATCC 700278 / DSM 12444 / CCUG 56034 / CIP 105152 / NBRC 16084 / F199).